The chain runs to 490 residues: Probable cytochrome P450 308a1 (490 aa).

Position 431 (C431) interacts with heme.

This sequence belongs to the cytochrome P450 family. The cofactor is heme.

It is found in the endoplasmic reticulum membrane. Its subcellular location is the microsome membrane. In terms of biological role, may be involved in the metabolism of insect hormones and in the breakdown of synthetic insecticides. This chain is Probable cytochrome P450 308a1 (Cyp308a1), found in Drosophila melanogaster (Fruit fly).